The chain runs to 200 residues: Elongation factor Ts (200 aa).

Residues 83 to 86 are involved in Mg(2+) ion dislocation from EF-Tu; sequence TDFA.

The protein belongs to the EF-Ts family.

The protein resides in the cytoplasm. Functionally, associates with the EF-Tu.GDP complex and induces the exchange of GDP to GTP. It remains bound to the aminoacyl-tRNA.EF-Tu.GTP complex up to the GTP hydrolysis stage on the ribosome. This chain is Elongation factor Ts, found in Syntrophobacter fumaroxidans (strain DSM 10017 / MPOB).